The sequence spans 89 residues: Cell division topological specificity factor (89 aa).

It belongs to the MinE family.

Prevents the cell division inhibition by proteins MinC and MinD at internal division sites while permitting inhibition at polar sites. This ensures cell division at the proper site by restricting the formation of a division septum at the midpoint of the long axis of the cell. In Edwardsiella ictaluri (strain 93-146), this protein is Cell division topological specificity factor.